The primary structure comprises 430 residues: Adenylosuccinate synthetase (430 aa).

GTP contacts are provided by residues 12–18 (GDEGKGK) and 40–42 (GHT). D13 acts as the Proton acceptor in catalysis. Mg(2+) contacts are provided by D13 and G40. IMP-binding positions include 13–16 (DEGK), 38–41 (NAGH), T128, R142, Q223, T238, and R302. Catalysis depends on H41, which acts as the Proton donor. 298-304 (TTTGRPR) is a substrate binding site. GTP is bound by residues R304, 330–332 (SID), and 412–414 (SVG).

It belongs to the adenylosuccinate synthetase family. As to quaternary structure, homodimer. Requires Mg(2+) as cofactor.

The protein localises to the cytoplasm. The catalysed reaction is IMP + L-aspartate + GTP = N(6)-(1,2-dicarboxyethyl)-AMP + GDP + phosphate + 2 H(+). It participates in purine metabolism; AMP biosynthesis via de novo pathway; AMP from IMP: step 1/2. Functionally, plays an important role in the de novo pathway of purine nucleotide biosynthesis. Catalyzes the first committed step in the biosynthesis of AMP from IMP. The sequence is that of Adenylosuccinate synthetase from Streptococcus pyogenes serotype M5 (strain Manfredo).